Reading from the N-terminus, the 146-residue chain is Large ribosomal subunit protein uL15 (146 aa).

Residues 1 to 13 are compositionally biased toward basic and acidic residues; the sequence is MKLHELRPAEGSR. The interval 1-55 is disordered; that stretch reads MKLHELRPAEGSRKSPKRVGRGTGSGLGKTSARGENGQNSRSGGGVRPGFEGGQM. Positions 42–52 are enriched in gly residues; it reads SGGGVRPGFEG.

The protein belongs to the universal ribosomal protein uL15 family. Part of the 50S ribosomal subunit.

Its function is as follows. Binds to the 23S rRNA. In Clostridium tetani (strain Massachusetts / E88), this protein is Large ribosomal subunit protein uL15.